The sequence spans 130 residues: Small ribosomal subunit protein uS8 (130 aa).

This sequence belongs to the universal ribosomal protein uS8 family. Part of the 30S ribosomal subunit. Contacts proteins S5 and S12.

Functionally, one of the primary rRNA binding proteins, it binds directly to 16S rRNA central domain where it helps coordinate assembly of the platform of the 30S subunit. The chain is Small ribosomal subunit protein uS8 from Pseudomonas putida (strain ATCC 700007 / DSM 6899 / JCM 31910 / BCRC 17059 / LMG 24140 / F1).